The chain runs to 816 residues: Fibroblast growth factor receptor 1 (816 aa).

The N-terminal stretch at 1-23 (MLSWRHLVFWAMLVMATLSAARP) is a signal peptide. Topologically, residues 24 to 374 (APTLPEQVSP…VIMTSPLYLE (351 aa)) are extracellular. The Ig-like C2-type 1 domain maps to 25-118 (PTLPEQVSPK…ETTFFAVNVS (94 aa)). A disulfide bond links Cys-54 and Cys-100. Residues Asn-76 and Asn-116 are each glycosylated (N-linked (GlcNAc...) asparagine). Residues 118–152 (SDRIPSVEDDDDDDEKSSSEEKEAENSKPNPVAPF) are disordered. A compositionally biased stretch (basic and acidic residues) spans 133–143 (KSSSEEKEAEN). 2 Ig-like C2-type domains span residues 156 to 244 (PEKM…YQLD) and 253 to 355 (PILQ…AWLT). A disulfide bridge links Cys-176 with Cys-228. Asn-238, Asn-262, Asn-294, Asn-315, and Asn-328 each carry an N-linked (GlcNAc...) asparagine glycan. Cys-275 and Cys-339 are oxidised to a cystine. Residues 375-395 (IIIYCTGAFLISCMLVTVIIY) form a helical membrane-spanning segment. Over 396–816 (KMKNTTKKTD…QHANGGLKKR (421 aa)) the chain is Cytoplasmic. At Tyr-459 the chain carries Phosphotyrosine; by autocatalysis. One can recognise a Protein kinase domain in the interval 474–763 (LILGKPLGEG…VAMTSNQEYL (290 aa)). ATP contacts are provided by residues 480–486 (LGEGCFG), Lys-510, 558–560 (EYA), and Asn-564. A phosphotyrosine; by autocatalysis mark is found at Tyr-579 and Tyr-581. Asp-619 acts as the Proton acceptor in catalysis. ATP is bound by residues Arg-623 and Asp-637. A phosphotyrosine; by autocatalysis mark is found at Tyr-649, Tyr-650, Tyr-726, and Tyr-762. Positions 776-816 (FPDTRSSTCSSGEDSVFSHDPLPDEPCLPKYQHANGGLKKR) are disordered. Positions 779 to 788 (TRSSTCSSGE) are enriched in polar residues.

The protein belongs to the protein kinase superfamily. Tyr protein kinase family. Fibroblast growth factor receptor subfamily. Monomer. Homodimer after ligand binding. In terms of processing, autophosphorylated. Binding of FGF family members together with heparan sulfate proteoglycan or heparin promotes receptor dimerization and autophosphorylation on tyrosine residues. Autophosphorylation occurs in trans between the two FGFR molecules present in the dimer and proceeds in a highly ordered manner. Phosphotyrosine residues provide docking sites for interacting proteins and so are crucial for FGFR1 function and its regulation. Post-translationally, ubiquitinated. FGFR1 is rapidly ubiquitinated after autophosphorylation, leading to internalization and degradation. N-glycosylated in the endoplasmic reticulum. The N-glycan chains undergo further maturation to an Endo H-resistant form in the Golgi apparatus.

The protein resides in the cell membrane. The protein localises to the nucleus. It localises to the cytoplasm. It is found in the cytosol. Its subcellular location is the cytoplasmic vesicle. The catalysed reaction is L-tyrosyl-[protein] + ATP = O-phospho-L-tyrosyl-[protein] + ADP + H(+). Its activity is regulated as follows. Present in an inactive conformation in the absence of bound ligand. Ligand binding leads to dimerization and activation by sequential autophosphorylation on tyrosine residues. Tyrosine-protein kinase that acts as a cell-surface receptor for fibroblast growth factors and plays an essential role in the regulation of embryonic development, cell proliferation, differentiation and migration. Required for normal mesoderm patterning and normal skeletogenesis. Phosphorylates PLCG1, FRS2, GAB1 and SHB. Ligand binding leads to the activation of several signaling cascades. Activation of PLCG1 leads to the production of the cellular signaling molecules diacylglycerol and inositol-1,4,5-trisphosphate. Phosphorylation of FRS2 triggers recruitment of GRB2, GAB1, PIK3R1 and SOS1, and mediates activation of RAS, MAPK1/ERK2, MAPK3/ERK1 and the MAP kinase signaling pathway, as well as of the AKT1 signaling pathway. Promotes phosphorylation of SHC1, STAT1 and PTPN11/SHP2. In the nucleus, enhances RPS6KA1 and CREB1 activity and contributes to the regulation of transcription. FGFR1 signaling is down-regulated by ubiquitination, internalization and degradation. The protein is Fibroblast growth factor receptor 1 (FGFR1) of Pleurodeles waltl (Iberian ribbed newt).